The following is a 152-amino-acid chain: Outer membrane protein assembly factor BamE (152 aa).

The first 32 residues, 1–32, serve as a signal peptide directing secretion; the sequence is MIDQNHDSEEQAQMQKLTRTVTLTVALTLVSG. The N-palmitoyl cysteine moiety is linked to residue cysteine 33. The S-diacylglycerol cysteine moiety is linked to residue cysteine 33. A disordered region spans residues 114–152; the sequence is IDRHGDFSRPPSVADERGIGPTDSTNARGNLLNARPDDE.

It belongs to the BamE family. As to quaternary structure, part of the Bam complex.

It is found in the cell outer membrane. Functionally, part of the outer membrane protein assembly complex, which is involved in assembly and insertion of beta-barrel proteins into the outer membrane. The sequence is that of Outer membrane protein assembly factor BamE from Halomonas elongata (strain ATCC 33173 / DSM 2581 / NBRC 15536 / NCIMB 2198 / 1H9).